Consider the following 349-residue polypeptide: GTP 3',8-cyclase (349 aa).

The region spanning 24-249 (PFGRAITYLR…VDSDYQTGGP (226 aa)) is the Radical SAM core domain. Arginine 33 contacts GTP. Positions 40 and 44 each coordinate [4Fe-4S] cluster. Position 46 (tyrosine 46) interacts with S-adenosyl-L-methionine. A [4Fe-4S] cluster-binding site is contributed by cysteine 47. Arginine 82 is a GTP binding site. Glycine 86 serves as a coordination point for S-adenosyl-L-methionine. A GTP-binding site is contributed by threonine 116. Serine 140 lines the S-adenosyl-L-methionine pocket. A GTP-binding site is contributed by lysine 176. S-adenosyl-L-methionine is bound at residue methionine 210. [4Fe-4S] cluster is bound by residues cysteine 273 and cysteine 276. 278-280 (RVR) serves as a coordination point for GTP. Cysteine 290 contributes to the [4Fe-4S] cluster binding site.

This sequence belongs to the radical SAM superfamily. MoaA family. Monomer and homodimer. It depends on [4Fe-4S] cluster as a cofactor.

It catalyses the reaction GTP + AH2 + S-adenosyl-L-methionine = (8S)-3',8-cyclo-7,8-dihydroguanosine 5'-triphosphate + 5'-deoxyadenosine + L-methionine + A + H(+). It participates in cofactor biosynthesis; molybdopterin biosynthesis. Its function is as follows. Catalyzes the cyclization of GTP to (8S)-3',8-cyclo-7,8-dihydroguanosine 5'-triphosphate. The polypeptide is GTP 3',8-cyclase (Agrobacterium fabrum (strain C58 / ATCC 33970) (Agrobacterium tumefaciens (strain C58))).